The following is a 212-amino-acid chain: ER lumen protein-retaining receptor 1 (212 aa).

Residues 1 to 4 are Lumenal-facing; the sequence is MNLF. The helical transmembrane segment at 5 to 24 threads the bilayer; the sequence is RFLGDLSHLLAIILLLLKIW. Residues 25-32 are Cytoplasmic-facing; that stretch reads KSRSCAGI. Residues 33-52 traverse the membrane as a helical segment; sequence SGKSQVLFAVVFTARYLDLF. The interaction with the K-D-E-L motif on target proteins stretch occupies residues 47 to 48; it reads RY. Residues 53 to 58 lie on the Lumenal side of the membrane; sequence TNYISL. A helical transmembrane segment spans residues 59 to 79; the sequence is YNTCMKVVYIACSFTTVWMIY. Residues 80 to 92 are Cytoplasmic-facing; that stretch reads SKFKATYDGNHDT. Residues 93 to 110 form a helical membrane-spanning segment; sequence FRVEFLVVPTAVLAFLVN. Residues 111 to 116 lie on the Lumenal side of the membrane; sequence HDFTPL. A helical transmembrane segment spans residues 117–135; the sequence is EILWTFSIYLESVAILPQL. Topologically, residues 136 to 149 are cytoplasmic; that stretch reads FMVSKTGEAETITS. The helical transmembrane segment at 150 to 168 threads the bilayer; sequence HYLFALGVYRTLYLFNWIW. Residues 159–169 form an interaction with the K-D-E-L motif on target proteins region; it reads RTLYLFNWIWR. Residues 169-178 lie on the Lumenal side of the membrane; it reads RYHFEGFFDL. The chain crosses the membrane as a helical span at residues 179–199; that stretch reads IAIVAGLVQTVLYCDFFYLYI. Residues 200–212 are Cytoplasmic-facing; it reads TKVLKGKKLSLPA. The interval 204–207 is important for recycling of cargo proteins with the sequence motif K-D-E-L from the Golgi to the endoplasmic reticulum; sequence KGKK. Ser-209 is subject to Phosphoserine; by PKA.

It belongs to the ERD2 family. In terms of assembly, upon ligand binding the receptor oligomerizes and interacts with components of the transport machinery such as ARFGAP1 and ARF1. Phosphorylation by PKA at Ser-209 is required for endoplasmic reticulum retention function.

It localises to the golgi apparatus membrane. The protein resides in the cytoplasmic vesicle. The protein localises to the COPI-coated vesicle membrane. It is found in the endoplasmic reticulum membrane. Its subcellular location is the endoplasmic reticulum-Golgi intermediate compartment membrane. Functionally, receptor for the C-terminal sequence motif K-D-E-L that is present on endoplasmic reticulum resident proteins and that mediates their recycling from the Golgi back to the endoplasmic reticulum. The sequence is that of ER lumen protein-retaining receptor 1 (Kdelr1) from Rattus norvegicus (Rat).